The primary structure comprises 244 residues: Small ribosomal subunit protein eS4 (244 aa).

The S4 RNA-binding domain maps to 43–106 (LPLLLVVRDV…DENYLVLFDE (64 aa)).

Belongs to the eukaryotic ribosomal protein eS4 family.

This is Small ribosomal subunit protein eS4 from Methanococcus maripaludis (strain C7 / ATCC BAA-1331).